The chain runs to 168 residues: ATP synthase subunit b (168 aa).

Residues 9 to 29 (SIPFGTIAYTLFIFLLLLVML) traverse the membrane as a helical segment.

It belongs to the ATPase B chain family. In terms of assembly, F-type ATPases have 2 components, F(1) - the catalytic core - and F(0) - the membrane proton channel. F(1) has five subunits: alpha(3), beta(3), gamma(1), delta(1), epsilon(1). F(0) has three main subunits: a(1), b(2) and c(10-14). The alpha and beta chains form an alternating ring which encloses part of the gamma chain. F(1) is attached to F(0) by a central stalk formed by the gamma and epsilon chains, while a peripheral stalk is formed by the delta and b chains.

It is found in the cell membrane. In terms of biological role, f(1)F(0) ATP synthase produces ATP from ADP in the presence of a proton or sodium gradient. F-type ATPases consist of two structural domains, F(1) containing the extramembraneous catalytic core and F(0) containing the membrane proton channel, linked together by a central stalk and a peripheral stalk. During catalysis, ATP synthesis in the catalytic domain of F(1) is coupled via a rotary mechanism of the central stalk subunits to proton translocation. Its function is as follows. Component of the F(0) channel, it forms part of the peripheral stalk, linking F(1) to F(0). This chain is ATP synthase subunit b, found in Bacillus cereus (strain B4264).